We begin with the raw amino-acid sequence, 237 residues long: Lectin (237 aa).

Mn(2+) contacts are provided by Glu8 and Asp10. Residues Asp10, Tyr12, Asn14, and Asp19 each contribute to the Ca(2+) site. A carbohydrate-binding residues include Tyr12 and Asn14. 2 residues coordinate Mn(2+): Asp19 and His24. 98–100 (GLY) lines the a carbohydrate pocket. Asp208 lines the Ca(2+) pocket. A carbohydrate-binding residues include Gly227 and Arg228.

The protein belongs to the leguminous lectin family. Homotetramer; dimer of dimers. Post-translationally, concanavalin A-like lectins of the Diocleinae subtribe undergo proteolytic processing referred to as circular permutation. The propeptide is split into an N-terminal and a C-terminal part, the gamma and beta chain, respectively. These are then religated in beta-gamma order to form the mature alpha chain. The beta and gamma chains can often be detected in cell extracts. Residues 1-118 of the mature chain, as displayed here, probably constitute the beta chain in the propeptide, residues 119-237 the gamma chain.

In terms of biological role, D-mannose/D-glucose-binding lectin with hemagglutinating activity towards rabbit and human erythrocytes. In rats, induces dose-dependent paw edema. Has low cytotoxicity against Artemisia sp. This Macropsychanthus comosus (Sea purse) protein is Lectin.